A 537-amino-acid chain; its full sequence is Cytochrome P450 monooxygenase AOL_s00215g282 (537 aa).

A helical transmembrane segment spans residues 9–29 (ATVVLCGSIVTVSIAYVIFVV). N126 is a glycosylation site (N-linked (GlcNAc...) asparagine). Residue C451 participates in heme binding.

It belongs to the cytochrome P450 family. It depends on heme as a cofactor.

The protein localises to the membrane. It functions in the pathway secondary metabolite biosynthesis; terpenoid biosynthesis. Its function is as follows. Cytochrome P450 monooxygenase; part of the gene cluster that mediates the biosynthesis of sesquiterpenyl epoxy-cyclohexenoids (SECs) such as anthrobotrisins and arthrosporols, metabolites that possess a novel hybrid carbon skeleton consisting of a polyketide-derived epoxycyclohexenol combined with a terpenoid-derived monocyclic sesquiterpenol substructure (PKS-PTS hybrid). The SEC pathway plays an important role for fungal soil colonization via decreasing fungal nematode-capturing ability. Within the pathway, the cytochrome P450 monooxygenase AOL_s00215g282 acts as a m-cresol hydrolase that converts m-cresol to toluquinol. The pathway begins with the biosynthesis of 6-methylsalicylic acid (6-MSA), the first precursor of the polyketide-derived epoxycyclohexenol in arthrosporols, by the polyketide synthase (PKS) AOL_s00215g283 via condensation of 1 acetate and 3 malonate units. The 6-methylsalicylic acid decarboxylase AOL_s00215g281 then catalyzes the decarboxylation of 6-methylsalicylic acid to yield m-cresol. The cytochrome P450 monooxygenase AOL_s00215g282 further oxidizes m-cresol to yield toluquinol. With the assistance of the oxidoreductase AOL_s00215g277, the polyprenyl transferase AOL_s00215g276 catalyzes the farnesylation of toluquinol to produce farnesyl hydroquinone, the hybrid precursor for biosynthesis of SECs. Farnesyl hydroquinone undergoes epoxidation and then subsequent dehydrogenation to form farnesyl epoxy-quinone, the first and simplest SEC. The cytochrome P450 monooxygenase AOL_s00215g278 and the FAD-dependent monooxygenase AOL_s00215g279 might be involved in the oxygenation of the phenol moiety, most likely in the epoxy formation. The cytochrome P450 monooxygenases AOL_s00215g274 and AOL_s00215g280 are involved in specific regional ketone reductions at respectively C-4 and C-1 of farnesyl epoxy-quinone PubMed:33823587. This Arthrobotrys oligospora (strain ATCC 24927 / CBS 115.81 / DSM 1491) (Nematode-trapping fungus) protein is Cytochrome P450 monooxygenase AOL_s00215g282.